Consider the following 135-residue polypeptide: C-type Lectin CRL (135 aa).

4 cysteine pairs are disulfide-bonded: Cys3-Cys14, Cys31-Cys131, Cys38-Cys133, and Cys106-Cys123. Positions 10–132 constitute a C-type lectin domain; that stretch reads MNGLCYKIFN…CESKDAFLCQ (123 aa). Ca(2+) is bound by residues Gln96, Asp98, Glu104, Asn119, and Asp120. The Galactose-binding motif lies at 96-98; that stretch reads QPD.

Belongs to the true venom lectin family. In terms of assembly, homodimer; disulfide-linked. Expressed by the venom gland.

The protein localises to the secreted. Beta-galactoside and N-acetylgalactosamine (GalNAc) specific C-type lectin. This Crotalus ruber ruber (Red diamond rattlesnake) protein is C-type Lectin CRL.